A 281-amino-acid chain; its full sequence is 4-deoxy-L-threo-5-hexosulose-uronate ketol-isomerase (281 aa).

Zn(2+)-binding residues include His-198, His-200, Glu-205, and His-248.

This sequence belongs to the KduI family. It depends on Zn(2+) as a cofactor.

The enzyme catalyses 5-dehydro-4-deoxy-D-glucuronate = 3-deoxy-D-glycero-2,5-hexodiulosonate. It participates in glycan metabolism; pectin degradation; 2-dehydro-3-deoxy-D-gluconate from pectin: step 4/5. Its function is as follows. Catalyzes the isomerization of 5-dehydro-4-deoxy-D-glucuronate to 3-deoxy-D-glycero-2,5-hexodiulosonate. This chain is 4-deoxy-L-threo-5-hexosulose-uronate ketol-isomerase, found in Levilactobacillus brevis (strain ATCC 367 / BCRC 12310 / CIP 105137 / JCM 1170 / LMG 11437 / NCIMB 947 / NCTC 947) (Lactobacillus brevis).